We begin with the raw amino-acid sequence, 433 residues long: Glutamate-1-semialdehyde 2,1-aminomutase (433 aa).

N6-(pyridoxal phosphate)lysine is present on Lys-273.

The protein belongs to the class-III pyridoxal-phosphate-dependent aminotransferase family. HemL subfamily. As to quaternary structure, homodimer. The cofactor is pyridoxal 5'-phosphate.

The protein localises to the cytoplasm. It carries out the reaction (S)-4-amino-5-oxopentanoate = 5-aminolevulinate. It participates in porphyrin-containing compound metabolism; protoporphyrin-IX biosynthesis; 5-aminolevulinate from L-glutamyl-tRNA(Glu): step 2/2. It functions in the pathway porphyrin-containing compound metabolism; chlorophyll biosynthesis. The polypeptide is Glutamate-1-semialdehyde 2,1-aminomutase (Microcystis aeruginosa (strain NIES-843 / IAM M-2473)).